Here is a 176-residue protein sequence, read N- to C-terminus: Retinol-binding protein 4-B (176 aa).

Residue S1 is modified to N-acetylserine. Disulfide bonds link C3/C159, C69/C173, and C119/C128. Q97 contributes to the substrate binding site.

Belongs to the calycin superfamily. Lipocalin family.

The protein resides in the secreted. In terms of biological role, RBP delivers retinol from the liver stores to the peripheral tissues. In plasma, the RBP-retinol complex interacts with transthyretin, this prevents its loss by filtration through the kidney glomeruli. In Oncorhynchus mykiss (Rainbow trout), this protein is Retinol-binding protein 4-B (rbp4b).